A 600-amino-acid polypeptide reads, in one-letter code: UvrABC system protein C (600 aa).

The 78-residue stretch at 15 to 92 (DKPGCYLMKD…IKKYQPYYNV (78 aa)) folds into the GIY-YIG domain. The UVR domain occupies 197 to 232 (SQVKQDLTEKMTQASMNLEFERAAEFRDQLKYIEQT).

Belongs to the UvrC family. In terms of assembly, interacts with UvrB in an incision complex.

It is found in the cytoplasm. The UvrABC repair system catalyzes the recognition and processing of DNA lesions. UvrC both incises the 5' and 3' sides of the lesion. The N-terminal half is responsible for the 3' incision and the C-terminal half is responsible for the 5' incision. This chain is UvrABC system protein C, found in Lactobacillus gasseri (strain ATCC 33323 / DSM 20243 / BCRC 14619 / CIP 102991 / JCM 1131 / KCTC 3163 / NCIMB 11718 / NCTC 13722 / AM63).